A 237-amino-acid polypeptide reads, in one-letter code: Pyridoxine 5'-phosphate synthase (237 aa).

3-amino-2-oxopropyl phosphate-binding residues include N7 and R18. Catalysis depends on H43, which acts as the Proton acceptor. 1-deoxy-D-xylulose 5-phosphate is bound by residues R45 and H50. The Proton acceptor role is filled by E70. Residue T100 coordinates 1-deoxy-D-xylulose 5-phosphate. H190 acts as the Proton donor in catalysis. 3-amino-2-oxopropyl phosphate-binding positions include D191 and 213–214 (GH).

This sequence belongs to the PNP synthase family. Homooctamer; tetramer of dimers.

The protein localises to the cytoplasm. It carries out the reaction 3-amino-2-oxopropyl phosphate + 1-deoxy-D-xylulose 5-phosphate = pyridoxine 5'-phosphate + phosphate + 2 H2O + H(+). It participates in cofactor biosynthesis; pyridoxine 5'-phosphate biosynthesis; pyridoxine 5'-phosphate from D-erythrose 4-phosphate: step 5/5. Catalyzes the complicated ring closure reaction between the two acyclic compounds 1-deoxy-D-xylulose-5-phosphate (DXP) and 3-amino-2-oxopropyl phosphate (1-amino-acetone-3-phosphate or AAP) to form pyridoxine 5'-phosphate (PNP) and inorganic phosphate. The chain is Pyridoxine 5'-phosphate synthase from Bacteroides fragilis (strain ATCC 25285 / DSM 2151 / CCUG 4856 / JCM 11019 / LMG 10263 / NCTC 9343 / Onslow / VPI 2553 / EN-2).